The chain runs to 261 residues: (R)-S-adenosyl-L-methionine hydrolase (261 aa).

Residues Asp12, Asp72, and Asn187 each coordinate adenosine. Residues Asn187, Ser231, and Val239 each coordinate (R)-S-adenosyl-L-methionine. Val239 contacts adenosine.

The protein belongs to the SAM hydrolase / SAM-dependent halogenase family.

It carries out the reaction (R)-S-adenosyl-L-methionine + H2O = adenosine + L-methionine + H(+). Activity is inhibited by chloride. Functionally, catalyzes the hydrolysis of S-adenosyl-L-methionine (SAM) into adenosine and L-methionine. Is likely stereoselective, specifically hydrolyzing (R)-S-adenosyl-L-methionine ((R)-SAM), the inactive form of the ubiquitous cofactor SAM, and not the active form of SAM, (S)-S-adenosyl-L-methionine. Probaly plays a role in preventing accumulation of (R)-S-adenosyl-L-methionine in cells; maintenance of (S)-S-denosyl-L-methionine homochirality is important for cellular health given that the (R)-form is largely inactive as a methyl donor and can function as an inhibitor of methyltransferases. Shows very slow iodinase activity in vitro. The chain is (R)-S-adenosyl-L-methionine hydrolase from Salinispora arenicola (strain CNS-205).